Here is a 577-residue protein sequence, read N- to C-terminus: 5'-AMP-activated protein kinase subunit gamma (577 aa).

A disordered region spans residues 45-226 (QSEGVGGGEL…NNNNSNSNNN (182 aa)). Positions 58 to 88 (NNNTTNNNTPTNTTTTTNTNTTTMNNSNNNN) are enriched in low complexity. 2 stretches are compositionally biased toward polar residues: residues 106-121 (SIEQ…SQDG) and 138-155 (ESQS…NNNM). Residues 165-226 (STDNKSSTNT…NNNNSNSNNN (62 aa)) show a composition bias toward low complexity. 4 consecutive CBS domains span residues 279 to 341 (VIPI…KKPK), 364 to 426 (ERPS…QLPE), 438 to 499 (IGTF…LSPS), and 517 to 574 (QRPE…DVKS).

Belongs to the 5'-AMP-activated protein kinase gamma subunit family.

Its function is as follows. AMPK may be responsible for the regulation of fatty acid synthesis by phosphorylation of acetyl-CoA carboxylase. In Dictyostelium discoideum (Social amoeba), this protein is 5'-AMP-activated protein kinase subunit gamma (prkag).